Here is a 78-residue protein sequence, read N- to C-terminus: Protein SlyX homolog (78 aa).

The protein belongs to the SlyX family.

The protein is Protein SlyX homolog of Xanthomonas euvesicatoria pv. vesicatoria (strain 85-10) (Xanthomonas campestris pv. vesicatoria).